Consider the following 85-residue polypeptide: U4-theraphotoxin-Hhn1m (85 aa).

The signal sequence occupies residues 1 to 22 (MKVTLIAILTCAAVLVLHTTAA). Positions 23–48 (EELEAESQLVEVGMPDTELAAVDEER) are excised as a propeptide. Disulfide bonds link Cys52–Cys66, Cys56–Cys77, and Cys71–Cys82.

It belongs to the neurotoxin 12 (Hwtx-2) family. 02 (Hwtx-2) subfamily. In terms of tissue distribution, expressed by the venom gland.

Its subcellular location is the secreted. In terms of biological role, postsynaptic neurotoxin. In Cyriopagopus hainanus (Chinese bird spider), this protein is U4-theraphotoxin-Hhn1m.